The chain runs to 125 residues: Phosphoribosyl-AMP cyclohydrolase (125 aa).

Asp74 contributes to the Mg(2+) binding site. Cys75 lines the Zn(2+) pocket. Asp76 and Asp78 together coordinate Mg(2+). Zn(2+) is bound by residues Cys92 and Cys99.

This sequence belongs to the PRA-CH family. Homodimer. It depends on Mg(2+) as a cofactor. Zn(2+) serves as cofactor.

It localises to the cytoplasm. The enzyme catalyses 1-(5-phospho-beta-D-ribosyl)-5'-AMP + H2O = 1-(5-phospho-beta-D-ribosyl)-5-[(5-phospho-beta-D-ribosylamino)methylideneamino]imidazole-4-carboxamide. Its pathway is amino-acid biosynthesis; L-histidine biosynthesis; L-histidine from 5-phospho-alpha-D-ribose 1-diphosphate: step 3/9. Its function is as follows. Catalyzes the hydrolysis of the adenine ring of phosphoribosyl-AMP. The sequence is that of Phosphoribosyl-AMP cyclohydrolase from Geobacter sp. (strain M21).